We begin with the raw amino-acid sequence, 831 residues long: Protein translocase subunit SecA (831 aa).

Residues Gln88, 106 to 110 (GEGKT), and Asp495 each bind ATP. 4 residues coordinate Zn(2+): Cys816, Cys818, Cys827, and Cys828.

It belongs to the SecA family. Monomer and homodimer. Part of the essential Sec protein translocation apparatus which comprises SecA, SecYEG and auxiliary proteins SecDF-YajC and YidC. Zn(2+) is required as a cofactor.

It is found in the cell membrane. Its subcellular location is the cytoplasm. The enzyme catalyses ATP + H2O + cellular proteinSide 1 = ADP + phosphate + cellular proteinSide 2.. Its function is as follows. Part of the Sec protein translocase complex. Interacts with the SecYEG preprotein conducting channel. Has a central role in coupling the hydrolysis of ATP to the transfer of proteins into and across the cell membrane, serving as an ATP-driven molecular motor driving the stepwise translocation of polypeptide chains across the membrane. The protein is Protein translocase subunit SecA of Lawsonia intracellularis (strain PHE/MN1-00).